Here is a 179-residue protein sequence, read N- to C-terminus: Large ribosomal subunit protein uL6 (179 aa).

It belongs to the universal ribosomal protein uL6 family. As to quaternary structure, part of the 50S ribosomal subunit.

Its function is as follows. This protein binds to the 23S rRNA, and is important in its secondary structure. It is located near the subunit interface in the base of the L7/L12 stalk, and near the tRNA binding site of the peptidyltransferase center. This is Large ribosomal subunit protein uL6 from Chlorobium limicola (strain DSM 245 / NBRC 103803 / 6330).